A 1042-amino-acid chain; its full sequence is SWI/SNF-related matrix-associated actin-dependent regulator of chromatin subfamily A member 1 (1042 aa).

The segment at 25 to 82 (EDEQPGPSTSQEEGAAAAATEATAATEKGEKKKEKNVSSFQLKLAAKAPKSEKEMDPE) is disordered. Low complexity predominate over residues 36 to 50 (EEGAAAAATEATAAT). Basic and acidic residues-rich tracts occupy residues 51 to 60 (EKGEKKKEKN) and 73 to 82 (PKSEKEMDPE). A phosphoserine mark is found at Ser-116 and Ser-119. A Helicase ATP-binding domain is found at 195–360 (ISLYENGVNG…WALLNFLLPD (166 aa)). ATP is bound at residue 208 to 215 (DEMGLGKT). Residues 311–314 (DEAH) carry the DEAH box motif. The region spanning 490–641 (VLDKLLAKLK…SIVIQQGRLI (152 aa)) is the Helicase C-terminal domain. Residues Lys-650, Lys-716, and Lys-738 each participate in a glycyl lysine isopeptide (Lys-Gly) (interchain with G-Cter in SUMO2) cross-link. The interval 819–849 (EQKKIDGAEPLTPEETEEKEKLLTQGFTNWT) is disordered. Residues 828–837 (PLTPEETEEK) show a composition bias toward basic and acidic residues. An SANT 1 domain is found at 843–895 (QGFTNWTKRDFNQFIKANEKYGRDDIDNIAREVEGKSPEEVMEYSAVFWERCN). Tyr-942 is modified (phosphotyrosine). Positions 946-1010 (KGKNYTEEED…QRRCNTLISL (65 aa)) constitute an SANT 2 domain.

Belongs to the SNF2/RAD54 helicase family. ISWI subfamily. As to quaternary structure, may form homodimers. Component of the ACF-1 ISWI chromatin remodeling complex at least composed of SMARCA1 and BAZ1A, which regulates the spacing of histone octamers on the DNA template to facilitate access to DNA. Within the complex interacts with BAZ1A; the interaction is direct. Component of the WICH-1 ISWI chromatin remodeling complex at least composed of SMARCA1 and BAZ1B/WSTF. Within the complex interacts with BAZ1B/WSTF. Component of the NoRC-1 ISWI chromatin remodeling complex at least composed of SMARCA1 and BAZ2A/TIP5. Within the complex interacts with BAZ2A/TIP5. Component of the BRF-1 ISWI chromatin remodeling complex at least composed of SMARCA1 and BAZ2B. Within the complex interacts with BAZ2B. Component of the NURF-1 ISWI chromatin remodeling complex (also called the nucleosome-remodeling factor (NURF) complex) at least composed of SMARCA1, BPTF, RBBP4 and RBBP7. Within the complex interacts with BPTF. Within the complex interacts with RBBP4 and RBBP7. Component of the CERF-1 ISWI chromatin remodeling complex (also called the CECR2-containing-remodeling factor (CERF) complex) at least composed of CECR2 and SMARCA1. LUZP1 is detected as part of the CERF-1 complex in embryonic stem cells where it is involved in complex stabilization but is not detected in the complex in the testis. Component of the RSF-1 ISWI chromatin remodeling complex at least composed of SMARCA1 and RSF1. Within the complex interacts with RSF1. Interacts with PRLR. Interacts with ERCC6. May form homodimers. Component of the BPFT-SMARCA1 complex at least composed of SMARCA1, BPFT, RBBP4 and RBBP7; the complex is catalytically inactive and does not remodel chromatin. Within the complex interacts with BPTF, RBBP4 and RBBP7. Component of the BAZ1A-1-SMARCA1 complex at least composed of SMARCA1 and BAZ1A; the complex is catalytically inactive and does not remodel chromatin. Component of the BAZ1B-1-SMARCA1 complex at least composed of SMARCA1 and BAZ1B; the complex is catalytically inactive and does not remodel chromatin. Expressed in lung, breast, kidney, ovary, skeletal muscle and brain. As to expression, mainly expressed in non-neuronal tissues such as lung, breast, kidney, and ovary.

The protein resides in the nucleus. Its subcellular location is the chromosome. It carries out the reaction ATP + H2O = ADP + phosphate + H(+). Functionally, ATPase that possesses intrinsic ATP-dependent chromatin-remodeling activity. ATPase activity is substrate-dependent, and is increased when nucleosomes are the substrate, but is also catalytically active when DNA alone is the substrate. Catalytic subunit of ISWI chromatin-remodeling complexes, which form ordered nucleosome arrays on chromatin and facilitate access to DNA during DNA-templated processes such as DNA replication, transcription, and repair. Within the ISWI chromatin-remodeling complexes, slides edge- and center-positioned histone octamers away from their original location on the DNA template. Catalytic activity and histone octamer sliding propensity is regulated and determined by components of the ISWI chromatin-remodeling complexes. The BAZ1A-, BAZ1B-, BAZ2A- and BAZ2B-containing ISWI chromatin-remodeling complexes regulate the spacing of nucleosomes along the chromatin and have the ability to slide mononucleosomes to the center of a DNA template. The CECR2- and RSF1-containing ISWI chromatin-remodeling complexes do not have the ability to slide mononucleosomes to the center of a DNA template. Within the NURF-1 and CERF-1 ISWI chromatin remodeling complexes, nucleosomes are the preferred substrate for its ATPase activity. Within the NURF-1 ISWI chromatin-remodeling complex, binds to the promoters of En1 and En2 to positively regulate their expression and promote brain development. May promote neurite outgrowth. May be involved in the development of luteal cells. Facilitates nucleosome assembly during DNA replication, ensuring replication fork progression and genomic stability by preventing replication stress and nascent DNA gaps. In terms of biological role, catalytically inactive when either DNA or nucleosomes are the substrate and does not possess chromatin-remodeling activity. Acts as a negative regulator of chromatin remodelers by generating inactive complexes. The sequence is that of SWI/SNF-related matrix-associated actin-dependent regulator of chromatin subfamily A member 1 from Homo sapiens (Human).